A 100-amino-acid chain; its full sequence is Large ribosomal subunit protein uL23 (100 aa).

It belongs to the universal ribosomal protein uL23 family. In terms of assembly, part of the 50S ribosomal subunit. Contacts protein L29, and trigger factor when it is bound to the ribosome.

One of the early assembly proteins it binds 23S rRNA. One of the proteins that surrounds the polypeptide exit tunnel on the outside of the ribosome. Forms the main docking site for trigger factor binding to the ribosome. This is Large ribosomal subunit protein uL23 from Mycolicibacterium paratuberculosis (strain ATCC BAA-968 / K-10) (Mycobacterium paratuberculosis).